Consider the following 349-residue polypeptide: Putative F-box/kelch-repeat protein At4g02310 (349 aa).

Residues 11-58 (SLFSLLPNDIVLNILARVPRWYHPILSCVSKNLRFLVSSSELKITRSL) enclose the F-box domain. Residues 154–204 (KIYVFGGIDDMNKRYYEGIHAQVFDLKTQTWHVGPNLSVKLACLNRSVVTP) form a Kelch repeat.

In Arabidopsis thaliana (Mouse-ear cress), this protein is Putative F-box/kelch-repeat protein At4g02310.